Consider the following 427-residue polypeptide: MGRGGDSSGQAHPAAELAVPSDRAEVSNADSKALHIVLYGKRVDVTKFQRTHPGGSKVFRIFQDRDATEQFESYHSKRAIKMMEGMLKKSEDAPADTPLPSQSPMGKDFKAMIERHVAAGYYDPCPLDELFKLSLVLLPTFAGMYMLKAGVGSPLCGALMVSFGWYLDGWLAHDYLHHSVFKGSVARTVGWNNAAGYFLGFVQGYAVEWWRARHNTHHVCTNEDGSDPDIKTAPLLIYVRNKPSIAKRLNAFQRYQQYYYVPVMAILDLYWRLESIAYVAMRLPKMLPQALALVAHYAIVAWVFAGNYHLLPLVTVLRGFGTGITVFATHYGEDILDADQVRHMTLVEQTALTSRNISGGWLVNVLTGFISLQTEHHLFPMMPTGNLMTIQPEVRAFFKKHGLEYREGNLIECVRQNIRALAFEHLL.

Residues 1 to 24 (MGRGGDSSGQAHPAAELAVPSDRA) are disordered. The Cytochrome b5 heme-binding domain maps to 36-84 (IVLYGKRVDVTKFQRTHPGGSKVFRIFQDRDATEQFESYHSKRAIKMME). 2 residues coordinate heme: H52 and H75. A Histidine box-1 motif is present at residues 178–182 (HSVFK). Residues 189 to 209 (VGWNNAAGYFLGFVQGYAVEW) form a helical membrane-spanning segment. A Histidine box-2 motif is present at residues 213 to 218 (RHNTHH). The next 2 membrane-spanning stretches (helical) occupy residues 261–281 (VPVM…YVAM) and 286–306 (MLPQ…VFAG). The Histidine box-3 motif lies at 373 to 377 (QTEHH).

This sequence belongs to the fatty acid desaturase type 1 family. Fe(2+) serves as cofactor.

The protein resides in the membrane. Fatty acid desaturase that introduces a cis double bond at the 8-position in 20-carbon polyunsaturated fatty acids incorporated in a glycerolipid that contain a Delta(8) double bond to yield (20:4(8,11,14,17)). In Rebecca salina (Marine microalga), this protein is Acyl-lipid 8-desaturase.